Here is a 398-residue protein sequence, read N- to C-terminus: MKLNKKTVEDIQVKGKKVLVRCDFNVPLKDGVITDENRLVGAMPTIKYLVNEGAKVILCSHLGKPKGEAKPELSLAPVAKRLSELLEKEVVFAADDTVVGENAKKAVAEMKDGDVVLLQNTRYRKEETKNEENFSKELASLADVFVNDAFGTAHRAHCSTVGVADFLNEAACGYLIQKELKFLGDAVETPVRPFVAILGGAKVSDKINVINNLLEKVDTLIIGGGMAYTFLKAQGYTIGKSLVEEDKVEYAKEMMDKAKAKGVKLLLPVDNVVGEEFDANTTPVTTEDANIPEGYMGLDIGPKTSALYADAVRTAKTVVWNGPMGVFEFANFAKGTIAVAEAMAEADATTIIGGGDSAAAVNQLGFGDKMTHISTGGGASLEFLEGKELPGIVALSDK.

Residues Asp23 to Asn25, Arg38, His61 to Lys64, Arg122, and Arg155 each bind substrate. ATP is bound by residues Lys206, Gly297, Glu328, and Gly354–Ser357.

The protein belongs to the phosphoglycerate kinase family. Monomer.

It localises to the cytoplasm. The enzyme catalyses (2R)-3-phosphoglycerate + ATP = (2R)-3-phospho-glyceroyl phosphate + ADP. The protein operates within carbohydrate degradation; glycolysis; pyruvate from D-glyceraldehyde 3-phosphate: step 2/5. In Clostridium novyi (strain NT), this protein is Phosphoglycerate kinase.